Consider the following 597-residue polypeptide: Coronatine-insensitive protein homolog 1b (597 aa).

The F-box domain maps to 22–64 (SIPEEALHLVLGYVDDPRDREAVSLVCRRWHRIDALTRKHVTV). Residues arginine 92, arginine 353, tyrosine 391, arginine 414, and arginine 501 each contribute to the jasmonate site.

In terms of assembly, interacts with TIFY10C/JAZ8 in a coronatine-dependent manner. Interacts with TIFY3/JAZ1, TIFY6A/JAZ3, TIFY6B/JAZ4, TIFY10A/JAZ6, TIFY10B/JAZ7, TIFY11A/JAZ9, TIFY11B/JAZ10, TIFY11C/JAZ11 and TIFY11D/JAZ12 in a coronatine-dependent manner. In terms of tissue distribution, expressed in roots, shoots, leaf sheaths and leaf blades.

In terms of biological role, involved in jasmonate (JA) signaling. Required for jasmonate signaling in plant defense responses. Can complement Arabidopsis coi1-1 mutant and restore jasmonate signaling. Component of SCF(COI1) E3 ubiquitin ligase complexes, which may mediate the ubiquitination and subsequent proteasomal degradation of target proteins, including TIFY/JAZ family. This Oryza sativa subsp. japonica (Rice) protein is Coronatine-insensitive protein homolog 1b.